We begin with the raw amino-acid sequence, 979 residues long: UPF0182 protein BCG_0095 (979 aa).

7 helical membrane passes run 19–39 (LVTA…LVDI), 63–83 (LAIV…ALLL), 114–134 (LFGW…ASFD), 174–194 (WLFV…YLFG), 211–231 (VQLA…YWLD), 260–280 (KLVL…AIFL), and 288–308 (MAAA…PLLM). Residues 898–948 (GTGRVATAPGGDAASAPPPGAGGPAPPQAVPPPRTTQPPAAPPRGPDVPPA) are disordered. Over residues 902 to 912 (VATAPGGDAAS) the composition is skewed to low complexity. The span at 913–946 (APPPGAGGPAPPQAVPPPRTTQPPAAPPRGPDVP) shows a compositional bias: pro residues.

Belongs to the UPF0182 family.

The protein localises to the cell membrane. The protein is UPF0182 protein BCG_0095 of Mycobacterium bovis (strain BCG / Pasteur 1173P2).